Reading from the N-terminus, the 361-residue chain is Protein SSUH2 homolog (361 aa).

The protein localises to the cytoplasm. It is found in the nucleus. Functionally, plays a role in odontogenesis. In Danio rerio (Zebrafish), this protein is Protein SSUH2 homolog.